Consider the following 961-residue polypeptide: MVELNNCSNSEENGCVDSLEVRFTDFCKNGLSMGESFVTEATKLFNDSKHLLLSNNSTIGVITEGVERYWFVFVLYSVKRLSEKEVGNSSNGNEGNAFSLCQILRGAKLNVVDFFKELPQFILKVGPTLSNLYGSDWEKRLEAKELQTNFVHLSLLSKYYKRAYQELFLASGNNEDKPSATSSSAIHLPQYYRFGWLLFLSLRIHVFSRFKDLVTCTNGLVSVLAILIIHVPVRFRNFNINDSSRFVKKGDKVDLLASLGKIYQTSIDDLRETMDKVNYLITEKLKKKPCLASEFRTENLDNLDTDGLTYFEDLMEESCLPSSVSILEKDYSDAIQNKGELDERIFVNEEDSLLGSGSLSGGVVNMNGVKRKFDAMASPAKTVTSTLSPYRSPNCANSKMTVATPVSTAMTTARWLRTVIAPLQPKPSAELERFLSSCDRDVTADVIRRAQIILEAIFPSSGPAEHCAAGGSLQSTSLMDNIWAEQRTSEALKLYYRVLQTMCTAESQILNGNNLTSLLTNERFHRCMLACSAELVLATHKTVTMLFPAVLERTGITAFDLSKVIESFIRHEESLPRELRRHLNSLEERLLESMVWEKGSSMYNSLAVAKPSLAAEINRTGLLAEPMPSLDAIAMHINLSSGSLPPLPSLHKNNLAPNGQIGDIRSPKKVCSEYRSVLVERNSFTSPVKDRFLALNNIKSKFPPPALQSAFASPTRPNPGGGGETCAETAINVFFGKIVKLAAVRINGMIERLQLSQQIRETVYCLFQKILSQRTSLFFNRHIDQIILCSFYGVAKRTGADHVDIITFYNEMFIPSVKPLLVELAPAGNAEKNNHNDGQGPASPKPSPFPKLPDMSPKKVSAVHNVYVSPLRASKMDALISHSSKSYYACVGESTHAYQSPSKDLDVINNRLNGNRKLRGALNFDVDAGLVSDSIVANSLYLQNGNCRSPVAHVKTEQPES.

The domain A stretch occupies residues 404 to 606 (TPVSTAMTTA…EKGSSMYNSL (203 aa)). A pocket region spans residues 404–819 (TPVSTAMTTA…NEMFIPSVKP (416 aa)). The tract at residues 607 to 728 (AVAKPSLAAE…PGGGGETCAE (122 aa)) is spacer. Residues 729–819 (TAINVFFGKI…NEMFIPSVKP (91 aa)) form a domain B region. Residues 829–856 (NAEKNNHNDGQGPASPKPSPFPKLPDMS) form a disordered region.

This sequence belongs to the retinoblastoma protein (RB) family.

It is found in the nucleus. Its function is as follows. Regulator of biological processes that recruits a histone deacetylase to control gene transcription. May play a role in the entry into mitosis, negatively regulating the cell proliferation. Formation of stable complexes with geminiviridae replication-associated proteins may create a cellular environment which favors viral DNA replication. The sequence is that of Retinoblastoma-related protein 1 (RB1) from Nicotiana tabacum (Common tobacco).